The primary structure comprises 350 residues: Protein RecA (350 aa).

67–74 (GPESSGKT) contributes to the ATP binding site.

The protein belongs to the RecA family.

The protein localises to the cytoplasm. Functionally, can catalyze the hydrolysis of ATP in the presence of single-stranded DNA, the ATP-dependent uptake of single-stranded DNA by duplex DNA, and the ATP-dependent hybridization of homologous single-stranded DNAs. It interacts with LexA causing its activation and leading to its autocatalytic cleavage. The protein is Protein RecA of Chlamydia caviae (strain ATCC VR-813 / DSM 19441 / 03DC25 / GPIC) (Chlamydophila caviae).